Reading from the N-terminus, the 119-residue chain is Fluoride-specific ion channel FluC 2 (119 aa).

Transmembrane regions (helical) follow at residues 1–21 (MIFA…ALTS) and 44–64 (GAFF…YAFL). Glycine 70 and threonine 73 together coordinate Na(+). Residues 98 to 118 (LLASYLGGAVLLTCGYYLGSL) form a helical membrane-spanning segment.

The protein belongs to the fluoride channel Fluc/FEX (TC 1.A.43) family.

The protein resides in the cell membrane. The enzyme catalyses fluoride(in) = fluoride(out). With respect to regulation, na(+) is not transported, but it plays an essential structural role and its presence is essential for fluoride channel function. Its function is as follows. Fluoride-specific ion channel. Important for reducing fluoride concentration in the cell, thus reducing its toxicity. The chain is Fluoride-specific ion channel FluC 2 from Lactobacillus delbrueckii subsp. bulgaricus (strain ATCC 11842 / DSM 20081 / BCRC 10696 / JCM 1002 / NBRC 13953 / NCIMB 11778 / NCTC 12712 / WDCM 00102 / Lb 14).